Consider the following 224-residue polypeptide: dTTP/UTP pyrophosphatase (224 aa).

Catalysis depends on aspartate 77, which acts as the Proton acceptor.

This sequence belongs to the Maf family. YhdE subfamily. It depends on a divalent metal cation as a cofactor.

It is found in the cytoplasm. The enzyme catalyses dTTP + H2O = dTMP + diphosphate + H(+). It carries out the reaction UTP + H2O = UMP + diphosphate + H(+). Nucleoside triphosphate pyrophosphatase that hydrolyzes dTTP and UTP. May have a dual role in cell division arrest and in preventing the incorporation of modified nucleotides into cellular nucleic acids. This chain is dTTP/UTP pyrophosphatase, found in Dehalococcoides mccartyi (strain CBDB1).